The primary structure comprises 444 residues: C4-dicarboxylate transport protein 3 (444 aa).

The next 9 membrane-spanning stretches (helical) occupy residues 22-42 (VLYVQVLIAIVLGAIVGWLWP), 60-80 (LIKMVIAPIIFCTVVSGIAHI), 95-115 (VYFEVVSTFALVIGLIIGNLV), 162-182 (GEILQVLLFSVLFGFAIMSLG), 198-218 (AVFGVISIVMRAAPIGAFGAM), 236-256 (LIATFYVTAALFVFVVLGIIA), 321-341 (IYMTLATLFIAQALGFDLSFG), 346-366 (ILVVAMLTSKGASGITGAGFI), and 399-419 (LTNLCGNGVACVIVAWWEGEL).

Belongs to the dicarboxylate/amino acid:cation symporter (DAACS) (TC 2.A.23) family.

Its subcellular location is the cell inner membrane. Its function is as follows. Responsible for the transport of dicarboxylates such as succinate, fumarate, and malate from the periplasm across the membrane. This Bradyrhizobium diazoefficiens (strain JCM 10833 / BCRC 13528 / IAM 13628 / NBRC 14792 / USDA 110) protein is C4-dicarboxylate transport protein 3.